Consider the following 346-residue polypeptide: Elongation factor 1-alpha (346 aa).

The tr-type G domain occupies glycine 1 to serine 127. Residue asparagine 49–aspartate 52 coordinates GTP.

This sequence belongs to the TRAFAC class translation factor GTPase superfamily. Classic translation factor GTPase family. EF-Tu/EF-1A subfamily.

The protein localises to the cytoplasm. In terms of biological role, this protein promotes the GTP-dependent binding of aminoacyl-tRNA to the A-site of ribosomes during protein biosynthesis. In Eimeria bovis, this protein is Elongation factor 1-alpha.